The sequence spans 943 residues: Isoleucine--tRNA ligase (943 aa).

The 'HIGH' region motif lies at 58-68 (PYANGTIHIGH). Glu-567 is an L-isoleucyl-5'-AMP binding site. A 'KMSKS' region motif is present at residues 608-612 (KMSKS). Lys-611 serves as a coordination point for ATP. Positions 906, 909, 926, and 929 each coordinate Zn(2+).

The protein belongs to the class-I aminoacyl-tRNA synthetase family. IleS type 1 subfamily. As to quaternary structure, monomer. The cofactor is Zn(2+).

The protein resides in the cytoplasm. The enzyme catalyses tRNA(Ile) + L-isoleucine + ATP = L-isoleucyl-tRNA(Ile) + AMP + diphosphate. Its function is as follows. Catalyzes the attachment of isoleucine to tRNA(Ile). As IleRS can inadvertently accommodate and process structurally similar amino acids such as valine, to avoid such errors it has two additional distinct tRNA(Ile)-dependent editing activities. One activity is designated as 'pretransfer' editing and involves the hydrolysis of activated Val-AMP. The other activity is designated 'posttransfer' editing and involves deacylation of mischarged Val-tRNA(Ile). The sequence is that of Isoleucine--tRNA ligase from Pseudomonas syringae pv. tomato (strain ATCC BAA-871 / DC3000).